Here is a 554-residue protein sequence, read N- to C-terminus: MFKITVFIYVLQLILPSKVHSSPVPDSDNGLREFPLSIVHINDFHARFEQTDELGGQCKPTAKCVGGYARLVTTVKKLKEEGQNTIFLNAADNYQGTLWYNLGKWNVTAYFMNLLPADAMTLGNHEFDDKIEGIVPFLEVIKTPIVVANIDDSLEPTFKGKYTKSVVLERGGRKIGIVGVIAQNTDNISSPGKLRFLDEIQSVKNESKRLREEEKVDIVIVLSHIGLDHDYDLAEQAGDYIDAIIGGHSHSFLWTGDNPPGKEKVVDAYPVEIVQTSGKKVLIVQASAFARYVGNITLYFGENNNLIRYAGAPVYLDSDVPEVPQIVEEMKAWEEFVHEKGNEIIAESRVVLSRENCRVSDCNIGNFFTDAYVHEYVTSHTGPYWTPVSVGLMNVGGIRASVDRGNITFSQLITMAPFENTVDTFDLSGKHLLEAFEHAVTVPNRLGFNGQNMLQVSGVKLVYDVTKCEGQRVVSAKIRCQKCDIPKYEPLDPEETYRIVTASFLANGGDGFTMIRDNKKNYKVGRKDYDVLINYAKYSSPITIGEEGRIRIIQ.

A signal peptide spans 1 to 21 (MFKITVFIYVLQLILPSKVHS). A divalent metal cation is bound by residues Asp-43, His-45, Asp-92, Asn-124, His-224, and His-248. Residues Arg-358, Asn-394, Arg-399, Phe-418, Phe-504, and Asp-510 each coordinate AMP.

The protein belongs to the 5'-nucleotidase family. Requires a divalent metal cation as cofactor. In terms of tissue distribution, salivary gland (at protein level).

The protein localises to the secreted. The enzyme catalyses a ribonucleoside 5'-triphosphate + 2 H2O = a ribonucleoside 5'-phosphate + 2 phosphate + 2 H(+). Its function is as follows. Facilitates hematophagy by inhibiting ADP-dependent platelet aggregation in the host. Cleaves adenosine triphosphate (ATP) and adenosine diphosphate (ADP) to adenosine monophosphate (AMP) and inorganic phosphate. Shows potential for antithrombotic activity. Can induce basophil activation. May reduce probing time by facilitating the speed of locating blood. The polypeptide is Apyrase (Tabanus yao (Horsefly)).